The chain runs to 347 residues: MSEQAIRLTQYSHGAGCGCKISPKVLETILHSDQAKFIDPNLLVGNETRDDAAVYDLGNGTSVISTTDFFMPIVDNPFDFGRIAATNAISDIYAMGGKPIMAIAILGWPVNTLAPEIAREVVEGGRFACQQAGIALAGGHSIDAPEPIFGLAVTGVVPTERVKKNSTAEAGCKLFLTKPLGIGVLTTAEKKSLLRPEHQNLATEVMCTMNKAGADFAEIDGVRAMTDVTGFGLLGHLSEVCQGAGLQAELWYEAVPKLPGVEEYIAQGAVPGGTSRNFASYGHLMGDMPDAWRSLLCDPQTSGGLLLAVEPAAEAQVQAVAAKHGITLSAIGELKTARGGRPMVEIR.

Residue Cys17 is part of the active site. ATP contacts are provided by residues Lys20 and 48 to 50 (TRD). A Mg(2+)-binding site is contributed by Asp51. Residues Asp68, Asp91, and 139–141 (GHS) each bind ATP. Residue Asp91 coordinates Mg(2+). Position 227 (Asp227) interacts with Mg(2+).

This sequence belongs to the selenophosphate synthase 1 family. Class I subfamily. In terms of assembly, homodimer. Mg(2+) is required as a cofactor.

It catalyses the reaction hydrogenselenide + ATP + H2O = selenophosphate + AMP + phosphate + 2 H(+). Functionally, synthesizes selenophosphate from selenide and ATP. This is Selenide, water dikinase from Cronobacter sakazakii (strain ATCC BAA-894) (Enterobacter sakazakii).